The sequence spans 288 residues: Ubiquitin thioesterase otubain-like (288 aa).

One can recognise an OTU domain in the interval Ser76–Ala275. Asp84 is a catalytic residue. The Nucleophile role is filled by Cys87. Ile175 provides a ligand contact to substrate. Active-site residues include His244 and His268.

Belongs to the peptidase C65 family.

It carries out the reaction Thiol-dependent hydrolysis of ester, thioester, amide, peptide and isopeptide bonds formed by the C-terminal Gly of ubiquitin (a 76-residue protein attached to proteins as an intracellular targeting signal).. Functionally, hydrolase that can remove conjugated ubiquitin from proteins and plays an important regulatory role at the level of protein turnover by preventing degradation. Specifically cleaves 'Lys-48'-linked polyubiquitin. The protein is Ubiquitin thioesterase otubain-like of Caenorhabditis briggsae.